Reading from the N-terminus, the 931-residue chain is Neuropilin-2 (931 aa).

The N-terminal stretch at 1–20 (MDMFPLTWVFLALYFSGHEV) is a signal peptide. Over 21–864 (RSQQDPPCGG…EKSWLYTLDP (844 aa)) the chain is Extracellular. Intrachain disulfides connect Cys-28–Cys-55, Cys-83–Cys-105, and Cys-149–Cys-175. 2 consecutive CUB domains span residues 28–142 (CGGR…YEIF) and 149–267 (CSKN…YYLI). 2 N-linked (GlcNAc...) asparagine glycosylation sites follow: Asn-152 and Asn-157. Positions 197, 211, and 252 each coordinate Ca(2+). A disulfide bridge links Cys-208 with Cys-230. Disulfide bonds link Cys-277-Cys-427 and Cys-434-Cys-592. 2 F5/8 type C domains span residues 277 to 427 (CNVP…LFGC) and 434 to 592 (CSNM…VLGC). The segment covering 298 to 310 (TFSDGRWTPQQSR) has biased composition (polar residues). The interval 298-317 (TFSDGRWTPQQSRLHGDDNG) is disordered. A disordered region spans residues 601–621 (VETLGPTVKSEETTTPYPMDE). N-linked (GlcNAc...) asparagine glycosylation occurs at Asn-629. Residues 642–802 (SGFNCNFDFP…TDVPLENCME (161 aa)) form the MAM domain. Residues 819-854 (THGGEGYEDEIDDEYEGDWSNSSSSTSGAGDPSSGK) are disordered. Positions 824–835 (GYEDEIDDEYEG) are enriched in acidic residues. Residues 836–851 (DWSNSSSSTSGAGDPS) show a composition bias toward low complexity. Asn-839 carries an N-linked (GlcNAc...) asparagine glycan. A helical membrane pass occupies residues 865–889 (ILITIIAMSSLGVLLGATCAGLLLY). The Cytoplasmic segment spans residues 890 to 931 (CTCSYSGLSSRSCTTLENYNFELYDGLKHKVKINHQKCCSEA).

This sequence belongs to the neuropilin family. Heterodimer with NRP1. Binds PLXNB1. In terms of tissue distribution, expressed in developing CNS, PNS and in some nonneural tissues including limb buds, developing bones, muscles, intestinal epithelium, kidney, lung and submandibular gland.

It is found in the membrane. Functionally, high affinity receptor for semaphorins 3C, 3F, VEGF-165 and VEGF-145 isoforms of VEGF, and the PLGF-2 isoform of PGF. The chain is Neuropilin-2 (Nrp2) from Mus musculus (Mouse).